The sequence spans 89 residues: Small ribosomal subunit protein uS15 (89 aa).

Belongs to the universal ribosomal protein uS15 family. Part of the 30S ribosomal subunit. Forms a bridge to the 50S subunit in the 70S ribosome, contacting the 23S rRNA.

Functionally, one of the primary rRNA binding proteins, it binds directly to 16S rRNA where it helps nucleate assembly of the platform of the 30S subunit by binding and bridging several RNA helices of the 16S rRNA. Its function is as follows. Forms an intersubunit bridge (bridge B4) with the 23S rRNA of the 50S subunit in the ribosome. The polypeptide is Small ribosomal subunit protein uS15 (Bartonella bacilliformis (strain ATCC 35685 / KC583 / Herrer 020/F12,63)).